Reading from the N-terminus, the 513-residue chain is Bifunctional purine biosynthesis protein PurH (513 aa).

The region spanning 1–146 (MPRFALLSVS…KNHAHLTILT (146 aa)) is the MGS-like domain.

This sequence belongs to the PurH family.

It catalyses the reaction (6R)-10-formyltetrahydrofolate + 5-amino-1-(5-phospho-beta-D-ribosyl)imidazole-4-carboxamide = 5-formamido-1-(5-phospho-D-ribosyl)imidazole-4-carboxamide + (6S)-5,6,7,8-tetrahydrofolate. The catalysed reaction is IMP + H2O = 5-formamido-1-(5-phospho-D-ribosyl)imidazole-4-carboxamide. Its pathway is purine metabolism; IMP biosynthesis via de novo pathway; 5-formamido-1-(5-phospho-D-ribosyl)imidazole-4-carboxamide from 5-amino-1-(5-phospho-D-ribosyl)imidazole-4-carboxamide (10-formyl THF route): step 1/1. It functions in the pathway purine metabolism; IMP biosynthesis via de novo pathway; IMP from 5-formamido-1-(5-phospho-D-ribosyl)imidazole-4-carboxamide: step 1/1. The protein is Bifunctional purine biosynthesis protein PurH of Synechococcus elongatus (strain ATCC 33912 / PCC 7942 / FACHB-805) (Anacystis nidulans R2).